Reading from the N-terminus, the 954-residue chain is MGFSLTDYAPYDFANRRHIGPSPKEMGQMLATLGVPSLEALINEALPEGIRRRDPLAFGPALSERDTLHRMRELADKNTVLTSLIGQGYHGTHTPPVILRNILENPAWYTAYTPYQPEISQGRLEALLNFQTMMADLTGLPIANASLLDEGTAAAEAMAMAQRASKSKARGFFVAEDCHPQTIDVIRTRAEPLGIEVIVGAVDALDPEAVFAALFQYPGSYGHVRDYSDVIEALHGARALAVVAADPLALTLLKSPGEMGADIAIGSTQRFGVPMGYGGPHAAYMTCTDALKRSMPGRIIGVSVDARGNKAYRLSLQTREQHIRREKANSNVCTAQALLAVMASMYGVFHGPDGLKAIAQTVHRKTARMADGLTELGFKVDPQDYFDTITVKVGSMQGVILAAALREGVNLRKVGTDRIGITLDELTLGRTIEAVWRAFGAEGMVYDKTRMVYHLPQEMLRESSYMTHPIFHMNRAEAEMTRYMRRLADRDLALDRAMIPLGSCTMKLNATVEMLPLTWPEFANLHPFAPADQAAGYHEMIAELSQMLCDVTGYDAMSMQPNSGAQGEYAGLLAIRGYHRARGEGHRNICLIPTSAHGTNPASAQMVGWKVVVVKSAENGDIDLEDFRAKAEQHSENLAGCMITYPSTHGVFEEIVREVCDITHAHGGQVYIDGANMNAMVGLSAPGDLGGDVSHLNLHKTFCIPHGGGGPGMGPIGVKAHLAPHLPSHATATGAGFGDAGAVASAAYGSPSILTISYAYCLLMGGAGLTQATKVAILNANYMAKRLSAGFPILYANDKGRVAHECILDTRVLDKIAGVTVEDVAKRLMDCGFHAPTMSWPVAGTLMVEPTESEPKAELDRFCDAMLAIREEADAIAAGSLDAENNPLKRAPHTVEDLVGDWDRPYSREQACYPPGAFRVDKYWPPVNRVDNAYGDRNLVCTCPPVEDYAEPAE.

K700 carries the N6-(pyridoxal phosphate)lysine modification.

It belongs to the GcvP family. The glycine cleavage system is composed of four proteins: P, T, L and H. Requires pyridoxal 5'-phosphate as cofactor.

It catalyses the reaction N(6)-[(R)-lipoyl]-L-lysyl-[glycine-cleavage complex H protein] + glycine + H(+) = N(6)-[(R)-S(8)-aminomethyldihydrolipoyl]-L-lysyl-[glycine-cleavage complex H protein] + CO2. Functionally, the glycine cleavage system catalyzes the degradation of glycine. The P protein binds the alpha-amino group of glycine through its pyridoxal phosphate cofactor; CO(2) is released and the remaining methylamine moiety is then transferred to the lipoamide cofactor of the H protein. This is Glycine dehydrogenase (decarboxylating) from Dinoroseobacter shibae (strain DSM 16493 / NCIMB 14021 / DFL 12).